The following is a 226-amino-acid chain: UPF0502 protein Gbem_0194 (226 aa).

This sequence belongs to the UPF0502 family.

This Citrifermentans bemidjiense (strain ATCC BAA-1014 / DSM 16622 / JCM 12645 / Bem) (Geobacter bemidjiensis) protein is UPF0502 protein Gbem_0194.